A 227-amino-acid chain; its full sequence is uncharacterized protein (227 aa).

An N-terminal signal peptide occupies residues 1–21 (MELKKIAVGLTALLGMSVANA).

This is an uncharacterized protein from Haemophilus influenzae (strain ATCC 51907 / DSM 11121 / KW20 / Rd).